The following is a 348-amino-acid chain: Dual-specificity RNA methyltransferase RlmN (348 aa).

Glu94 serves as the catalytic Proton acceptor. The Radical SAM core domain maps to 100 to 330 (GKHNWTACIS…TAIIRASRGR (231 aa)). A disulfide bridge connects residues Cys107 and Cys336. Cys114, Cys118, and Cys121 together coordinate [4Fe-4S] cluster. Residues 163–164 (GE), Ser195, 217–219 (SLN), and Asn293 each bind S-adenosyl-L-methionine. The S-methylcysteine intermediate role is filled by Cys336.

Belongs to the radical SAM superfamily. RlmN family. [4Fe-4S] cluster is required as a cofactor.

The protein localises to the cytoplasm. It catalyses the reaction adenosine(2503) in 23S rRNA + 2 reduced [2Fe-2S]-[ferredoxin] + 2 S-adenosyl-L-methionine = 2-methyladenosine(2503) in 23S rRNA + 5'-deoxyadenosine + L-methionine + 2 oxidized [2Fe-2S]-[ferredoxin] + S-adenosyl-L-homocysteine. The catalysed reaction is adenosine(37) in tRNA + 2 reduced [2Fe-2S]-[ferredoxin] + 2 S-adenosyl-L-methionine = 2-methyladenosine(37) in tRNA + 5'-deoxyadenosine + L-methionine + 2 oxidized [2Fe-2S]-[ferredoxin] + S-adenosyl-L-homocysteine. Specifically methylates position 2 of adenine 2503 in 23S rRNA and position 2 of adenine 37 in tRNAs. m2A2503 modification seems to play a crucial role in the proofreading step occurring at the peptidyl transferase center and thus would serve to optimize ribosomal fidelity. This Syntrophus aciditrophicus (strain SB) protein is Dual-specificity RNA methyltransferase RlmN.